Reading from the N-terminus, the 1059-residue chain is MVPEPAPAAATEPRRSTRRRLMTAAAMEAEAEAVADLDEIDREMSRAESRKRQRRTAKEKPGARKGATEWKPEDVEKAAAAEGVAELDEIDREMPRPELRKRQRRTAKEKPSAHEGATEWKPEDVEKAAAQEPEGTELDSGLSPAESRGKRQRGVEKVKRRTRKKTAKEKTKETTEKSAAQAPEKMKVNDAGGALAEDVCADEPDAEQMAMEEEEEAADVLEAEERMGKCVGEGSAEKAATRKRVARPSTARRVEDSDDHFVGDPVPDDEARQRWPVRYSRKGSDSLLKQEPDEDEEMKARCHYLAANVDDEIYHLDDDVYVKAGPDEENYIGRITEFFEGVDRGSYFSCQWFFRTADTVISSKLLKVHDHRHNHKRVFLSKEKNDNLIECIVSKVKIAHVDPNMTPQARAHAISDCDLYYDMSYSVAYSTFANLPADNDGALGSEATSNISCDDADNSSKGKLSADIVAPYSEQTETASLLDLYSGCGAMSTGLCLGFAFSGINLETRWAVDINKYACACLKHNHPYSQVRNEKTEDFLALIQQWDALCRKYVVHKNDTLEPSIDMPLNDADDVNEPLPEDIFDVEELLEICYGDPSNTGKNGLWFKVRWKGYDPSYDTWEPIDGLSDCPERIKEFVEKGHKENILPLPGAVDVICGGPPCQGISGFNRFRKHNDPLEDEKNKQLVVFMDIVKYLRPKYVLMENVVDILKFADGFLGRYAMSCLVAMNYQARLGMMAAGYYGLPQFRMRAFLWGALPSMVLPKFPLPTHDAVVRGIVPTTFSQSVVAYNEVDTRCLRKALLLADAISDLPKVGNDQPKDVIEYSVAPKTEFQRYIRNNRKDIQDYSFRGDDPSEEGKLFDHQPLKLNKDDYERVQRIPVKKGANFRDLKGVIVGPDNTVRLDPNISRERLSSGKPLVPDYAISFVKGKSTKPFGRLWWDETVPTVVTRAEPHNQIILHPSQDRVLTIRENARLQGFPDYYRLIGPLKEKYIQVGNAVAIPVARALGYALGLAYRGESDGDRAVLKLPESFIYADQETVVKSSAGTPGSEIADSEQLFE.

Disordered regions lie at residues 1–196 (MVPE…GALA) and 230–272 (CVGE…DEAR). The segment covering 29–41 (AEAEAVADLDEID) has biased composition (acidic residues). 3 stretches are compositionally biased toward basic and acidic residues: residues 42–79 (REMSRAESRKRQRRTAKEKPGARKGATEWKPEDVEKAA), 92–129 (REMPRPELRKRQRRTAKEKPSAHEGATEWKPEDVEKAA), and 147–157 (SRGKRQRGVEK). Basic residues predominate over residues 158-167 (VKRRTRKKTA). Positions 252–262 (RRVEDSDDHFV) are enriched in basic and acidic residues. The BAH domain occupies 312–436 (EIYHLDDDVY…VAYSTFANLP (125 aa)). The region spanning 479-1017 (ASLLDLYSGC…YALGLAYRGE (539 aa)) is the SAM-dependent MTase C5-type domain. Residues 584–649 (FDVEELLEIC…KGHKENILPL (66 aa)) enclose the Chromo domain. The active site involves cysteine 662.

Belongs to the class I-like SAM-binding methyltransferase superfamily. C5-methyltransferase family.

It is found in the nucleus. The enzyme catalyses a 2'-deoxycytidine in DNA + S-adenosyl-L-methionine = a 5-methyl-2'-deoxycytidine in DNA + S-adenosyl-L-homocysteine + H(+). Functionally, involved in CpXpG DNA methylation. May not play a major role in maintaining CpXpG methylation. In Oryza sativa subsp. japonica (Rice), this protein is DNA (cytosine-5)-methyltransferase CMT1.